A 963-amino-acid chain; its full sequence is Respiratory burst oxidase homolog protein A (963 aa).

A compositionally biased stretch (basic and acidic residues) spans 1 to 12 (MRGLPGHERRWT). The interval 1-36 (MRGLPGHERRWTSDTVSSGKDLSGESSPGTDSGNIS) is disordered. Residues 1–399 (MRGLPGHERR…VYSLQENWKR (399 aa)) lie on the Cytoplasmic side of the membrane. The span at 13–36 (SDTVSSGKDLSGESSPGTDSGNIS) shows a compositional bias: polar residues. EF-hand-like regions lie at residues 219-227 (AKDGYLYRS) and 253-264 (RRLKVDKISKEE). Residues 276 to 311 (SFDSRLQIFFDMVDKNEDGRIGEEEVKEIIMLSASA) enclose the EF-hand domain. The Ca(2+) site is built by Asp289, Asn291, Asp293, Arg295, and Glu300. A helical transmembrane segment spans residues 400 to 420 (IWVLVLWILIMIGLFLWKFYL). The Extracellular portion of the chain corresponds to 421–435 (YKQKSAFQVMGYCLL). A helical transmembrane segment spans residues 436–456 (TAKGAAETLKFNMALILLPVC). Residues 438-595 (KGAAETLKFN…LLIIVYIVLI (158 aa)) enclose the Ferric oxidoreductase domain. Topologically, residues 457–482 (RNTITFLRSTKLSCFVPFDDNINFHK) are cytoplasmic. A helical membrane pass occupies residues 483 to 503 (TVAAAIVTGIILHAGNHLVCD). Residues 504-535 (FPKLIHANNTNYQKYLVNDFGPSQPQYIDLVK) lie on the Extracellular side of the membrane. Residues 536–556 (GVEGVTGIIMVILMAIAFTLA) traverse the membrane as a helical segment. The Cytoplasmic portion of the chain corresponds to 557 to 583 (TRWFRRSLIKFPKPFDRLTGFNAFWYS). The helical transmembrane segment at 584-604 (HHLLIIVYIVLIIHGTFLYLV) threads the bilayer. Residues 605–759 (HNWYSKTTWM…APAQDYRKYD (155 aa)) are Extracellular-facing. The FAD-binding FR-type domain occupies 634–754 (SGLYTVRLLK…DGPYGAPAQD (121 aa)). Residues 760 to 780 (VLLLVGLGIGATPFISILKDL) traverse the membrane as a helical segment. Over 781–963 (LKNIVTMEEQ…TKFEFHKEHF (183 aa)) the chain is Cytoplasmic.

Belongs to the RBOH (TC 5.B.1.3) family. Monomer and homodimer. Post-translationally, phosphorylated by CPK.

It localises to the cell membrane. Functionally, calcium-dependent NADPH oxidase that generates superoxide. Involved in the rapid and transient phase I oxidative burst induced by pathogen infection. The sequence is that of Respiratory burst oxidase homolog protein A (RBOHA) from Solanum tuberosum (Potato).